Here is a 40-residue protein sequence, read N- to C-terminus: Large ribosomal subunit protein bL36 (40 aa).

The protein belongs to the bacterial ribosomal protein bL36 family.

The chain is Large ribosomal subunit protein bL36 from Corynebacterium urealyticum (strain ATCC 43042 / DSM 7109).